Here is a 602-residue protein sequence, read N- to C-terminus: Elongation factor 4 (602 aa).

The tr-type G domain maps to 7 to 189; the sequence is SRIRNFCIIA…AVVDRVPAPA (183 aa). Residues 19 to 24 and 136 to 139 each bind GTP; these read DHGKST and NKID.

It belongs to the TRAFAC class translation factor GTPase superfamily. Classic translation factor GTPase family. LepA subfamily.

It is found in the cell inner membrane. The catalysed reaction is GTP + H2O = GDP + phosphate + H(+). Its function is as follows. Required for accurate and efficient protein synthesis under certain stress conditions. May act as a fidelity factor of the translation reaction, by catalyzing a one-codon backward translocation of tRNAs on improperly translocated ribosomes. Back-translocation proceeds from a post-translocation (POST) complex to a pre-translocation (PRE) complex, thus giving elongation factor G a second chance to translocate the tRNAs correctly. Binds to ribosomes in a GTP-dependent manner. The protein is Elongation factor 4 of Synechococcus sp. (strain CC9902).